We begin with the raw amino-acid sequence, 37 residues long: Small ribosomal subunit protein uS19 (37 aa).

Belongs to the universal ribosomal protein uS19 family.

This Helix lucorum (Snail) protein is Small ribosomal subunit protein uS19 (RPS15).